Here is an 897-residue protein sequence, read N- to C-terminus: DNA mismatch repair protein MutS (897 aa).

Position 654-661 (654-661 (GPNMAGKS)) interacts with ATP.

The protein belongs to the DNA mismatch repair MutS family.

In terms of biological role, this protein is involved in the repair of mismatches in DNA. It is possible that it carries out the mismatch recognition step. This protein has a weak ATPase activity. This chain is DNA mismatch repair protein MutS, found in Maricaulis maris (strain MCS10) (Caulobacter maris).